Reading from the N-terminus, the 423-residue chain is Protein disulfide isomerase-like 5-2 (423 aa).

Residues 1-35 (MAATTTRPLPLLLLLLLPPLLLLLLSFHAAAAAAA) form the signal peptide. Residues 36–149 (EEFPRDGRVI…LVRNLNKFVA (114 aa)) enclose the Thioredoxin domain. Residues Cys-71 and Cys-74 each act as nucleophile in the active site. A disulfide bridge connects residues Cys-71 and Cys-74. A glycan (N-linked (GlcNAc...) asparagine) is linked at Asn-181. The chain crosses the membrane as a helical span at residues 386-406 (LVSLNSLYILICVFALLGVMI).

This sequence belongs to the protein disulfide isomerase family.

The protein resides in the membrane. Acts as a protein-folding catalyst that interacts with nascent polypeptides to catalyze the formation, isomerization, and reduction or oxidation of disulfide bonds. May play a role in storage protein biogenesis. The protein is Protein disulfide isomerase-like 5-2 (PDIL5-2) of Oryza sativa subsp. japonica (Rice).